Consider the following 264-residue polypeptide: Virulence plasmid protein pGP3-D (264 aa).

The sequence is that of Virulence plasmid protein pGP3-D from Chlamydia psittaci (Chlamydophila psittaci).